Here is a 438-residue protein sequence, read N- to C-terminus: Serine hydroxymethyltransferase (438 aa).

(6S)-5,6,7,8-tetrahydrofolate-binding positions include Leu-133 and 137 to 139 (GHL). At Lys-242 the chain carries N6-(pyridoxal phosphate)lysine.

It belongs to the SHMT family. Homodimer. The cofactor is pyridoxal 5'-phosphate.

It localises to the cytoplasm. It catalyses the reaction (6R)-5,10-methylene-5,6,7,8-tetrahydrofolate + glycine + H2O = (6S)-5,6,7,8-tetrahydrofolate + L-serine. It functions in the pathway one-carbon metabolism; tetrahydrofolate interconversion. Its pathway is amino-acid biosynthesis; glycine biosynthesis; glycine from L-serine: step 1/1. Its function is as follows. Catalyzes the reversible interconversion of serine and glycine with tetrahydrofolate (THF) serving as the one-carbon carrier. This reaction serves as the major source of one-carbon groups required for the biosynthesis of purines, thymidylate, methionine, and other important biomolecules. Also exhibits THF-independent aldolase activity toward beta-hydroxyamino acids, producing glycine and aldehydes, via a retro-aldol mechanism. The sequence is that of Serine hydroxymethyltransferase from Brucella abortus (strain S19).